Reading from the N-terminus, the 113-residue chain is Protein translation factor SUI1 homolog 1 (113 aa).

The tract at residues 1-24 (MSELDSQVPTAFDPFADANAEDSG) is disordered. Ser2 carries the post-translational modification N-acetylserine.

It belongs to the SUI1 family.

Probably involved in translation. The chain is Protein translation factor SUI1 homolog 1 from Arabidopsis thaliana (Mouse-ear cress).